The following is a 456-amino-acid chain: Palmitoyltransferase PFA4 (456 aa).

The Cytoplasmic portion of the chain corresponds to 1 to 9 (MAARNWSRV). The helical transmembrane segment at 10–30 (WVGGTVILISFIAFSSQIFVI) threads the bilayer. Residues 31-37 (WPWYGRE) lie on the Lumenal side of the membrane. The chain crosses the membrane as a helical span at residues 38-58 (ISLDLLMLLVPLNLAAFMIFW). Topologically, residues 59–138 (NYRLCVITSP…GNCVGFYNQG (80 aa)) are cytoplasmic. In terms of domain architecture, DHHC spans 95 to 145 (RYCKNCAHYKPPRAHHCRQCKTCWLKLDHHCPWIGNCVGFYNQGHFIRFLL). The S-palmitoyl cysteine intermediate role is filled by Cys125. A helical transmembrane segment spans residues 139-159 (HFIRFLLWVDIGTTFHLIIMV). The Lumenal portion of the chain corresponds to 160 to 176 (RRVLYIAEYYHEPTLAD). A helical membrane pass occupies residues 177-197 (VLFLVFNFATCVPVWLCVGMF). Residues 198-456 (SIYHVYLACG…DPEEESGYTH (259 aa)) lie on the Cytoplasmic side of the membrane. The disordered stretch occupies residues 284-377 (PPQDPSRLPN…YDHYDEGPMY (94 aa)). Residues 285-298 (PQDPSRLPNPPPIP) show a composition bias toward pro residues. Residues 309-321 (NGFNPNLRPTNSL) are compositionally biased toward polar residues. The segment covering 337-352 (SHEQGRHYSSGDERDN) has biased composition (basic and acidic residues).

It belongs to the DHHC palmitoyltransferase family. PFA4 subfamily.

The protein localises to the endoplasmic reticulum membrane. The enzyme catalyses L-cysteinyl-[protein] + hexadecanoyl-CoA = S-hexadecanoyl-L-cysteinyl-[protein] + CoA. In terms of biological role, mediates the reversible addition of palmitate to target proteins, thereby regulating their membrane association and biological function. Responsible for the modification of a subset of proteins that are critical in cryptococcal pathogenesis, with substrates involved in cell wall synthesis, signal transduction, and membrane trafficking. Palmitoylates chitin synthase CHS3. The sequence is that of Palmitoyltransferase PFA4 from Cryptococcus neoformans var. grubii serotype A (strain H99 / ATCC 208821 / CBS 10515 / FGSC 9487) (Filobasidiella neoformans var. grubii).